Reading from the N-terminus, the 954-residue chain is MTQNLQMADRFDSSAVEQALYKHWEEQGYFKPTENPSLPSYCIAIPPPNVTGSLHMGHAFQQTLMDTLIRFNRMEGNNTLWQTGTDHAGIATQMVVERKIAAEEGKTRHDYGREAFINKIWDWKAYSGGTISQQMRRLGNSIDWDRERFTMDEGLSNAVKEVFVRLHEEGLIYRGKRLVNWDPKLHTAISDLEVENKESKGSLWHFRYPLANGAKTADGKDYLVVATTRPETVLGDTAVAVHPEDERYQSLIGKTVVLPLANREIPIVADEYVDREFGTGVVKITPAHDFNDYEVGKRHGLPMVNVMTMNADIRAEAEIIGTDGKPLTTYEAKIPADYQGLERFAARKKVVADFEALGLLDEIKPHDLKVPYGDRGGVPIEPMLTDQWYVSVKPLAEVATKAVEDGEIQFVPKQYENLYFSWMRDIQDWCISRQLWWGHRIPAWYDEAGNVYVARSEEEVRQKHNLPADLALRQDEDVLDTWFSSGLWTFSTLGWPEQTKELKMFHPTDVLITGFDIIFFWVARMIMFTMHFVKDENGKPQVPFKTVYVTGLIRDEQGQKMSKSKGNVLDPIDMIDGISLEDLLEKRTGNMMQPQLAEKIAKATRKEFENGIAAHGTDALRFTLAALASNGRDINWDMKRLEGYRNFCNKLWNASRFVLTNDKLDLSAGEVEYSLADRWIESKFNRTVGEFREALSQYRFDLAANAIYDFTWNEFCDWYLELTKPVFANGTEAQKRGASQTLVRVLEKLLRLAHPIMPFITEEIWQKVKGFAGIDADTIMLQPFPKVVKSELDESAEMQIGWIKELIIAVRNIRAESNIAPSKGLEFLVRNVSDEQRKILAENDRLLKAMAKLDSVQVLSADETAPLSVAKLVGNVEVLIPMAGFINKEAELARLTKEIEKMRGEITRIENKLGNEAFVAKAPEAVIAKEREKMQEYQNGLEKLQTQYQAIENL.

The short motif at 48 to 58 (PNVTGSLHMGH) is the 'HIGH' region element. The 'KMSKS' region motif lies at 560 to 564 (KMSKS). K563 is a binding site for ATP. Residues 883 to 954 (AGFINKEAEL…QTQYQAIENL (72 aa)) are a coiled coil.

It belongs to the class-I aminoacyl-tRNA synthetase family. ValS type 1 subfamily. Monomer.

Its subcellular location is the cytoplasm. The catalysed reaction is tRNA(Val) + L-valine + ATP = L-valyl-tRNA(Val) + AMP + diphosphate. In terms of biological role, catalyzes the attachment of valine to tRNA(Val). As ValRS can inadvertently accommodate and process structurally similar amino acids such as threonine, to avoid such errors, it has a 'posttransfer' editing activity that hydrolyzes mischarged Thr-tRNA(Val) in a tRNA-dependent manner. The polypeptide is Valine--tRNA ligase (Actinobacillus pleuropneumoniae serotype 3 (strain JL03)).